The chain runs to 385 residues: 8-amino-7-oxononanoate synthase (385 aa).

Arg-21 contacts substrate. 108 to 109 serves as a coordination point for pyridoxal 5'-phosphate; the sequence is GF. His-133 contacts substrate. Pyridoxal 5'-phosphate-binding residues include Ser-179, His-207, and Thr-233. Lys-236 is subject to N6-(pyridoxal phosphate)lysine. Residue Thr-352 coordinates substrate.

Belongs to the class-II pyridoxal-phosphate-dependent aminotransferase family. BioF subfamily. In terms of assembly, homodimer. It depends on pyridoxal 5'-phosphate as a cofactor.

It catalyses the reaction 6-carboxyhexanoyl-[ACP] + L-alanine + H(+) = (8S)-8-amino-7-oxononanoate + holo-[ACP] + CO2. Its pathway is cofactor biosynthesis; biotin biosynthesis. Functionally, catalyzes the decarboxylative condensation of pimeloyl-[acyl-carrier protein] and L-alanine to produce 8-amino-7-oxononanoate (AON), [acyl-carrier protein], and carbon dioxide. The chain is 8-amino-7-oxononanoate synthase from Salmonella agona (strain SL483).